We begin with the raw amino-acid sequence, 1038 residues long: Ribosome quality control complex subunit 2 (1038 aa).

Residues 350–383 (ALRIQNQESQAQKKIDDARAENDRKIQALLDVQE) adopt a coiled-coil conformation. Disordered regions lie at residues 459-499 (LNTS…MKRK), 708-824 (KTSG…DEPG), and 877-898 (QRKKEEIMKREVREDRKNKREK). Residues 713–768 (EDNGDDDEEEEEEEEEEEEEEEEEEEEEEEEKEEEEKEEEQQQDEDDSNEVNGLEK) adopt a coiled-coil conformation. Positions 714–761 (DNGDDDEEEEEEEEEEEEEEEEEEEEEEEEKEEEEKEEEQQQDEDDSN) are enriched in acidic residues. The span at 780-794 (SFEHDNLEKDIEKHC) shows a compositional bias: basic and acidic residues. Polar residues predominate over residues 795–805 (TISSDTDSDSG). Position 797 is a phosphoserine (serine 797). A coiled-coil region spans residues 830–912 (IENINSNVRG…QALKFTKKEK (83 aa)). The segment covering 877 to 894 (QRKKEEIMKREVREDRKN) has biased composition (basic and acidic residues).

This sequence belongs to the NEMF family. In terms of assembly, component of the ribosome quality control complex (RQC), composed of the E3 ubiquitin ligase RKR1/LTN1, RQC1 and RQC2, as well as CDC48 and its ubiquitin-binding cofactors associated with the 60S ribosomal subunit. RQC2 binds to the 40S-binding surface of tRNAs.

The protein localises to the cytoplasm. Key component of the ribosome quality control complex (RQC), a ribosome-associated complex that mediates the extraction of incompletely synthesized nascent chains from stalled ribosomes as well as their ubiquitin-mediated proteasomal degradation. Thereby, frees 60S subunit ribosomes from the stalled translation complex and prevents the accumulation of nascent polypeptide chains that are potentially toxic for the cell. Within the RQC complex, RQC2 specifically binds stalled 60S ribosomal subunits by recognizing an exposed, nascent chain-conjugated tRNA moiety and promotes the recruitment of RKR1/LTN1 to stalled 60S subunits. Following binding to stalled 60S ribosomal subunits, RQC2 mediates CAT tailing by recruiting alanine- and threonine-charged tRNA to the A-site and directing the elongation of stalled nascent chains independently of mRNA or 40S subunits, leading to non-templated C-terminal Ala and Thr extensions (CAT tails). CAT tails promote the RKR1/LTN1-mediated ubiquitination of incompletely synthesized nascent polypeptides: CAT tailing facilitates RKR1/LTN1-dependent ubiquitination by exposing lysine residues that would otherwise remain buried in the ribosomal exit tunnel. Following ubiquitination, incompletely synthesized nascent polypeptides are recognized by CDC48 and degraded by the proteasome. CAT-tailed proteins tend to aggregate and sequester chaperones and can induce proteotoxic stress; their RKR1/LTN1-dependent ubiquitination and degradation is required to prevent proteotoxic stress. The chain is Ribosome quality control complex subunit 2 from Saccharomyces cerevisiae (strain ATCC 204508 / S288c) (Baker's yeast).